Reading from the N-terminus, the 354-residue chain is Methylthioribose-1-phosphate isomerase (354 aa).

Residues 58–60 (RGA), Arg101, and Gln204 contribute to the substrate site. Residue Asp245 is the Proton donor of the active site. Position 255–256 (255–256 (NK)) interacts with substrate.

The protein belongs to the eIF-2B alpha/beta/delta subunits family. MtnA subfamily.

It carries out the reaction 5-(methylsulfanyl)-alpha-D-ribose 1-phosphate = 5-(methylsulfanyl)-D-ribulose 1-phosphate. The protein operates within amino-acid biosynthesis; L-methionine biosynthesis via salvage pathway; L-methionine from S-methyl-5-thio-alpha-D-ribose 1-phosphate: step 1/6. In terms of biological role, catalyzes the interconversion of methylthioribose-1-phosphate (MTR-1-P) into methylthioribulose-1-phosphate (MTRu-1-P). This chain is Methylthioribose-1-phosphate isomerase, found in Xanthomonas axonopodis pv. citri (strain 306).